Consider the following 1407-residue polypeptide: E3 ubiquitin-protein ligase linker protein MMS1 (1407 aa).

The required for interaction with MMS22 stretch occupies residues 1–600; that stretch reads MLGLRTHGLD…QFQIFRHLRI (600 aa). Thr-1294 is modified (phosphothreonine).

In terms of assembly, component of multiple cullin-RING ligases (CRLs) composed of 4 subunits: the RING protein HRT1, the cullin RTT101, a linker protein MMS1, and one of many alternative substrate receptors belonging to a protein family described as DCAF (DDB1- and CUL4-associated factor). Component of a RTT101(MMS1-MMS22) complex with the substrate receptor MMS22. This complex further interacts with RTT107 and CTF4 to form RTT101-MMS1-MMS22-RTT107 and RTT101-MMS1-MMS22-CTF4 complexes respectively. Component of a RTT101(MSS1-CRT10) complex with the substrate receptor CRT10. Component of a RTT101(MSS1-ESC2) complex with the potential substrate receptor ESC2. Component of a RTT101(MSS1-ORC5) complex with the potential substrate receptor ORC5. Interacts with RTT101 (via N-ter). Interacts (via N-ter) with MMS22 (via C-ter). Interacts with CRT10.

The protein resides in the nucleus. Its function is as follows. Component of multiple cullin-RING-based E3 ubiquitin-protein ligase complexes (CRLs), which mediate the ubiquitination of target proteins. The CRL associates with CDC34 as the E2 ubiquitin-conjugating enzyme. The functional specificity of the CRL depends on the type of the associated substrate receptor protein. RTT101(MMS1-MMS22) promotes fork progression through damaged DNA or natural pause sites by stabilizing replication proteins like the replication fork-pausing complex (FPC) and leading-strand polymerase at stalled replication forks. RTT101(MMS1-MMS22) ubiquitinates the acetylated histones H3K56ac-H4 at lysine residues H3K121, H3K122 and H3K125. Ubiquitination is required for efficient histone deposition during replication-coupled nucleosome assembly, probably by facilitating the transfer of H3-H4 from ASF1 to other chaperones involved in histone deposition. RTT101(MMS1-CRT10) may regulate nucleotide synthesis through transcriptional regulation of ribonucleotide reductase. RTT101(MMS1) is also involved in the non-functional rRNA decay (NRD) of 25S rRNA through the selective, ubiquitination-dependent degradation of nonfunctional ribosomal particles. Involved in the regulation of TY1 transposition. The protein is E3 ubiquitin-protein ligase linker protein MMS1 (MMS1) of Saccharomyces cerevisiae (strain ATCC 204508 / S288c) (Baker's yeast).